A 771-amino-acid polypeptide reads, in one-letter code: PH and SEC7 domain-containing protein 2 (771 aa).

2 disordered regions span residues 1 to 67 and 107 to 136; these read MEED…PDVA and GDNA…VRDG. Residues 47-66 are compositionally biased toward basic and acidic residues; it reads GHERRGTPADTEEPTKDPDV. At serine 191 the chain carries Phosphoserine. Disordered stretches follow at residues 207–230 and 244–307; these read GDMG…SSSR and PNGF…ANGC. Low complexity predominate over residues 218 to 230; sequence LGSPLRRSISSSR. Acidic residues predominate over residues 257–266; the sequence is GDEDDDEEDT. One can recognise an SEC7 domain in the interval 260–462; it reads DDDEEDTDKL…KTLYNSIKNE (203 aa). Low complexity predominate over residues 288 to 299; sequence ELSSSEGLEPGS. The region spanning 512-625 is the PH domain; that stretch reads TTYKHGVLTR…WILRINLVAA (114 aa). Residues 622–639 traverse the membrane as a helical segment; sequence LVAAIFSAPAFPAAVSSM. A coiled-coil region spans residues 651–680; the sequence is TTRLCQEEQLRSHENKLRQLTAELAEHRCH. The disordered stretch occupies residues 739–771; that stretch reads DDPSLRKTHSSPALSQGHVTGSKTTKDATGPDT. The segment covering 748 to 761 has biased composition (polar residues); that stretch reads SSPALSQGHVTGSK.

Belongs to the PSD family.

The protein localises to the cell membrane. The protein resides in the cell projection. It localises to the ruffle membrane. It is found in the cleavage furrow. In Homo sapiens (Human), this protein is PH and SEC7 domain-containing protein 2 (PSD2).